The following is a 284-amino-acid chain: 4-hydroxybenzoate octaprenyltransferase (284 aa).

A run of 8 helical transmembrane segments spans residues 16–36 (PIGI…ASDG), 40–60 (WTLL…GCAI), 91–111 (LLVA…LNTL), 132–152 (FFAI…PMGF), 157–177 (NTVP…AVAY), 206–226 (VAAV…VGWQ), 231–251 (TWFA…YTLI), and 259–279 (CFAA…GVVL).

The protein belongs to the UbiA prenyltransferase family. Mg(2+) serves as cofactor.

It localises to the cell inner membrane. It carries out the reaction all-trans-octaprenyl diphosphate + 4-hydroxybenzoate = 4-hydroxy-3-(all-trans-octaprenyl)benzoate + diphosphate. The protein operates within cofactor biosynthesis; ubiquinone biosynthesis. Functionally, catalyzes the prenylation of para-hydroxybenzoate (PHB) with an all-trans polyprenyl group. Mediates the second step in the final reaction sequence of ubiquinone-8 (UQ-8) biosynthesis, which is the condensation of the polyisoprenoid side chain with PHB, generating the first membrane-bound Q intermediate 3-octaprenyl-4-hydroxybenzoate. The polypeptide is 4-hydroxybenzoate octaprenyltransferase (Herminiimonas arsenicoxydans).